A 2696-amino-acid polypeptide reads, in one-letter code: Histone-lysine N-methyltransferase, H3 lysine-36 specific (2696 aa).

The residue at position 117 (serine 117) is a Phosphoserine. Disordered stretches follow at residues 207-252 (MGSE…EKAA) and 281-311 (DPDS…PFCQ). Residues 236–248 (QKNKQRNEVDGSN) show a composition bias toward basic and acidic residues. Polar residues-rich tracts occupy residues 281-290 (DPDSSTSTLG) and 297-306 (GTSSSSTSQE). A PWWP 1 domain is found at 323–388 (VGDLIWAKFK…AGKAIVMFEG (66 aa)). 2 positions are modified to phosphoserine: serine 483 and serine 486. A disordered region spans residues 487–514 (ADEKEKPCAKSRARKSSDNPKRTSVKKG). Position 766 is a phosphoserine (serine 766). Residues 872-891 (LGEDVSDSGTSKPSKPLLFS) are disordered. Residue lysine 906 forms a Glycyl lysine isopeptide (Lys-Gly) (interchain with G-Cter in SUMO2) linkage. 7 disordered regions span residues 936-1035 (YRSP…DAFS), 1067-1093 (VLQG…PLQI), 1112-1134 (SKVK…NGKG), 1243-1272 (SIGD…SEKK), 1294-1344 (PKKK…EPPV), 1382-1428 (SPRP…KKGD), and 1480-1534 (KMQC…MQGE). Residues 948–961 (SPVGVSKVLVSGGS) are compositionally biased toward low complexity. The segment covering 971–982 (GTQNSANPSPSG) has biased composition (polar residues). Basic and acidic residues-rich tracts occupy residues 1000–1017 (SDKR…DCVT), 1070–1090 (GDRE…KEDP), and 1112–1124 (SKVK…KISE). A compositionally biased stretch (basic and acidic residues) spans 1300–1314 (KVQEQVHKVSSRCEE). The span at 1323 to 1337 (SSAQNKQVDENSLIS) shows a compositional bias: polar residues. Residue lysine 1339 forms a Glycyl lysine isopeptide (Lys-Gly) (interchain with G-Cter in SUMO2) linkage. Serine 1510 carries the post-translational modification Phosphoserine. Residues 1513–1523 (ETVEEGVEHDP) show a composition bias toward basic and acidic residues. 3 consecutive PHD-type zinc fingers follow at residues 1543–1589 (ENVC…CRTG), 1590–1646 (IHTC…CHAA), and 1707–1751 (VSWC…CKAG). The 63-residue stretch at 1756 to 1818 (YREIVWVKVG…QARVFPYMEG (63 aa)) folds into the PWWP 2 domain. Residues 1890–1940 (SEIPRCNCKATDENPCGIDSECINRMLLYECHPTVCPAGGRCQNQCFSKRQ) enclose the AWS domain. One can recognise an SET domain in the interval 1942 to 2059 (PEVEIFRTLQ…AGTELTFNYN (118 aa)). Residues 1952 to 1954 (RGW), 1994 to 1997 (TNFY), 2020 to 2021 (NH), asparagine 2065, and lysine 2071 contribute to the S-adenosyl-L-methionine site. The inhibits enzyme activity in the absence of bound histone stretch occupies residues 2060–2066 (LECLGNG). The Post-SET domain maps to 2066-2082 (GKTVCKCGAPNCSGFLG). The tract at residues 2091 to 2111 (ATEEKSKKFKKKQQGKRRTQG) is disordered. Positions 2097–2108 (KKFKKKQQGKRR) are enriched in basic residues. The PHD-type 4; atypical zinc-finger motif lies at 2118 to 2165 (EDECFSCGDAGQLVSCKKPGCPKVYHADCLNLTKRPAGKWECPWHQCD). Residues 2213-2422 (LEPGEIREYV…SLSQRLPPPE (210 aa)) are disordered. The segment covering 2222-2232 (VPPPVPLPPGP) has biased composition (pro residues). Basic and acidic residues predominate over residues 2281-2298 (RPLERTDSRPQPLDKVRD). Residues 2303-2314 (GTKSQSLVSSQR) are compositionally biased toward polar residues. Residues 2330-2348 (SDKPSPVTSPSSSPSVRSQ) are compositionally biased toward low complexity. Phosphoserine is present on serine 2369. 2 stretches are compositionally biased toward polar residues: residues 2371 to 2381 (RPQSLEKTSVP) and 2394 to 2404 (ITSSPKPQTSD). A Phosphothreonine modification is found at threonine 2462. Disordered stretches follow at residues 2464 to 2499 (RQKE…GLGH), 2553 to 2575 (TQAS…QSPG), 2595 to 2616 (KSGQ…EEKK), and 2665 to 2696 (LGRG…SEQK). Residue serine 2471 is modified to Phosphoserine. A Glycyl lysine isopeptide (Lys-Gly) (interchain with G-Cter in SUMO2) cross-link involves residue lysine 2616. The span at 2674-2686 (EQNTLPALNQAPS) shows a compositional bias: polar residues.

It belongs to the class V-like SAM-binding methyltransferase superfamily. Interacts with the ligand-binding domains of RARA and THRA in the absence of ligand; in the presence of ligand the interaction is severely disrupted but some binding still occurs. Interacts with the ligand-binding domains of RXRA and ESRRA only in the presence of ligand. Interacts with ZNF496. Interacts with AR DNA- and ligand-binding domains. Expressed in the fetal/adult brain, kidney, skeletal muscle, spleen, and the thymus, and faintly in the lung.

Its subcellular location is the nucleus. The protein resides in the chromosome. The catalysed reaction is L-lysyl(36)-[histone H3] + 2 S-adenosyl-L-methionine = N(6),N(6)-dimethyl-L-lysyl(36)-[histone H3] + 2 S-adenosyl-L-homocysteine + 2 H(+). Histone methyltransferase that dimethylates Lys-36 of histone H3 (H3K36me2). Transcriptional intermediary factor capable of both negatively or positively influencing transcription, depending on the cellular context. In Homo sapiens (Human), this protein is Histone-lysine N-methyltransferase, H3 lysine-36 specific (NSD1).